Consider the following 360-residue polypeptide: Peptide chain release factor 1 (360 aa).

N5-methylglutamine is present on Gln234.

It belongs to the prokaryotic/mitochondrial release factor family. Post-translationally, methylated by PrmC. Methylation increases the termination efficiency of RF1.

It localises to the cytoplasm. In terms of biological role, peptide chain release factor 1 directs the termination of translation in response to the peptide chain termination codons UAG and UAA. This Renibacterium salmoninarum (strain ATCC 33209 / DSM 20767 / JCM 11484 / NBRC 15589 / NCIMB 2235) protein is Peptide chain release factor 1.